The primary structure comprises 126 residues: Aspartate 1-decarboxylase (126 aa).

Catalysis depends on Ser25, which acts as the Schiff-base intermediate with substrate; via pyruvic acid. Ser25 carries the pyruvic acid (Ser) modification. Thr57 provides a ligand contact to substrate. Residue Tyr58 is the Proton donor of the active site. 73 to 75 (GAA) lines the substrate pocket.

Belongs to the PanD family. As to quaternary structure, heterooctamer of four alpha and four beta subunits. Pyruvate serves as cofactor. Is synthesized initially as an inactive proenzyme, which is activated by self-cleavage at a specific serine bond to produce a beta-subunit with a hydroxyl group at its C-terminus and an alpha-subunit with a pyruvoyl group at its N-terminus.

The protein localises to the cytoplasm. The enzyme catalyses L-aspartate + H(+) = beta-alanine + CO2. It functions in the pathway cofactor biosynthesis; (R)-pantothenate biosynthesis; beta-alanine from L-aspartate: step 1/1. Its function is as follows. Catalyzes the pyruvoyl-dependent decarboxylation of aspartate to produce beta-alanine. The polypeptide is Aspartate 1-decarboxylase (Proteus mirabilis (strain HI4320)).